The following is a 351-amino-acid chain: Putative F-box protein At4g09790 (351 aa).

The F-box domain occupies 1–51 (MTTICDLPRDLVARILSRVPLTSMRRVRFTCKRWNTISKDPSFAKTHFGKA).

This Arabidopsis thaliana (Mouse-ear cress) protein is Putative F-box protein At4g09790.